Reading from the N-terminus, the 411-residue chain is Serine--tRNA ligase (411 aa).

L-serine is bound at residue 226–228 (TSE). Position 257–259 (257–259 (RKE)) interacts with ATP. Glu280 is an L-serine binding site. An ATP-binding site is contributed by 344-347 (EISS). Residue Ser379 coordinates L-serine.

The protein belongs to the class-II aminoacyl-tRNA synthetase family. Type-1 seryl-tRNA synthetase subfamily. As to quaternary structure, homodimer. The tRNA molecule binds across the dimer.

It localises to the cytoplasm. It carries out the reaction tRNA(Ser) + L-serine + ATP = L-seryl-tRNA(Ser) + AMP + diphosphate + H(+). The catalysed reaction is tRNA(Sec) + L-serine + ATP = L-seryl-tRNA(Sec) + AMP + diphosphate + H(+). Its pathway is aminoacyl-tRNA biosynthesis; selenocysteinyl-tRNA(Sec) biosynthesis; L-seryl-tRNA(Sec) from L-serine and tRNA(Sec): step 1/1. Functionally, catalyzes the attachment of serine to tRNA(Ser). Is also able to aminoacylate tRNA(Sec) with serine, to form the misacylated tRNA L-seryl-tRNA(Sec), which will be further converted into selenocysteinyl-tRNA(Sec). The chain is Serine--tRNA ligase from Campylobacter jejuni subsp. jejuni serotype O:2 (strain ATCC 700819 / NCTC 11168).